A 244-amino-acid chain; its full sequence is Agamous-like MADS-box protein AGL13 (244 aa).

The 55-residue stretch at R3–F57 folds into the MADS-box domain. The K-box domain maps to T85–K175.

The protein resides in the nucleus. In terms of biological role, probable transcription factor. This Arabidopsis thaliana (Mouse-ear cress) protein is Agamous-like MADS-box protein AGL13 (AGL13).